The chain runs to 324 residues: Phosphate transport system permease protein PstC 2 (324 aa).

Transmembrane regions (helical) follow at residues 30 to 50 (ASAA…FLLV), 90 to 110 (LSSI…AVFL), 125 to 145 (MVDL…IFVL), 174 to 194 (AGGG…LPIV), 237 to 257 (VAAS…VLVI), and 290 to 310 (PLPT…TFLV). Positions 85–314 (FMVTALSSIT…VLTFLVNAAA (230 aa)) constitute an ABC transmembrane type-1 domain.

It belongs to the binding-protein-dependent transport system permease family. CysTW subfamily.

It is found in the cell membrane. Its function is as follows. Part of the binding-protein-dependent transport system for phosphate; probably responsible for the translocation of the substrate across the membrane. The sequence is that of Phosphate transport system permease protein PstC 2 (pstC2) from Mycobacterium bovis (strain ATCC BAA-935 / AF2122/97).